The following is a 431-amino-acid chain: Septin-11 (431 aa).

Ala-2 is modified (N-acetylalanine). Ser-9 carries the post-translational modification Phosphoserine. The 267-residue stretch at 38–304 (QGFCFNILCV…ELYRRCKLEE (267 aa)) folds into the Septin-type G domain. The interval 48-55 (GETGIGKS) is G1 motif. Residues 48-55 (GETGIGKS), Gly-103, 184-192 (KADTIAKNE), Gly-238, and Arg-253 each bind GTP. A G3 motif region spans residues 100–103 (DTVG). The interval 183–186 (AKAD) is G4 motif. A coiled-coil region spans residues 320–413 (QETYEAKRNE…LLQSQAQQSG (94 aa)). Residues 400–431 (AAAQLLQSQAQQSGAQQTKKDKDKKNPWLCTE) form a disordered region. Residues 401 to 416 (AAQLLQSQAQQSGAQQ) are compositionally biased toward low complexity.

Belongs to the TRAFAC class TrmE-Era-EngA-EngB-Septin-like GTPase superfamily. Septin GTPase family. Septins polymerize into heterooligomeric protein complexes that form filaments, and can associate with cellular membranes, actin filaments and microtubules. Forms homooligomers. GTPase activity is required for filament formation. Interacts with SEPTIN7, SEPTIN9 and SEPTIN12. Expressed in the cerebral cortex (at protein level).

The protein localises to the cytoplasm. The protein resides in the cytoskeleton. It localises to the synapse. It is found in the cell projection. Its subcellular location is the dendritic spine. The protein localises to the axon. In terms of biological role, filament-forming cytoskeletal GTPase. May play a role in cytokinesis (Potential). May play a role in the cytoarchitecture of neurons, including dendritic arborization and dendritic spines, and in GABAergic synaptic connectivity. The polypeptide is Septin-11 (Mus musculus (Mouse)).